The primary structure comprises 170 residues: Small ribosomal subunit protein uS5 (170 aa).

The S5 DRBM domain occupies 12–75 (LSELLVSVRR…NAAKKSMIRV (64 aa)).

The protein belongs to the universal ribosomal protein uS5 family. As to quaternary structure, part of the 30S ribosomal subunit. Contacts proteins S4 and S8.

Its function is as follows. With S4 and S12 plays an important role in translational accuracy. Located at the back of the 30S subunit body where it stabilizes the conformation of the head with respect to the body. This chain is Small ribosomal subunit protein uS5, found in Wolbachia pipientis wMel.